The following is a 419-amino-acid chain: E3 ubiquitin-protein ligase pellino homolog 2 (419 aa).

The region spanning 15–202 is the FHA; atypical domain; sequence EPVKYRELVV…HPQGGFTEES (188 aa).

It belongs to the pellino family. Interacts with TRAF6, IRAK4 and MAP3K7. Interacts with IRAK1. Interacts with BCL10; this interaction is impaired by SOCS3. Phosphorylated by IRAK1 and IRAK4 enhancing its E3 ligase activity. In terms of tissue distribution, widely expressed both in embryos and adult. Weakly or not expressed in spleen and thymus.

It catalyses the reaction S-ubiquitinyl-[E2 ubiquitin-conjugating enzyme]-L-cysteine + [acceptor protein]-L-lysine = [E2 ubiquitin-conjugating enzyme]-L-cysteine + N(6)-ubiquitinyl-[acceptor protein]-L-lysine.. It participates in protein modification; protein ubiquitination. In terms of biological role, E3 ubiquitin ligase catalyzing the covalent attachment of ubiquitin moieties onto substrate proteins. Involved in the TLR and IL-1 signaling pathways via interaction with the complex containing IRAK kinases and TRAF6. Mediates IL1B-induced IRAK1 'Lys-63'-linked polyubiquitination and possibly 'Lys-48'-linked ubiquitination. May be important for LPS- and IL1B-induced MAP3K7-dependent, but not MAP3K3-dependent, NF-kappa-B activation. Can activate the MAP (mitogen activated protein) kinase pathway leading to activation of ELK1. This is E3 ubiquitin-protein ligase pellino homolog 2 (Peli2) from Mus musculus (Mouse).